We begin with the raw amino-acid sequence, 629 residues long: tRNA uridine 5-carboxymethylaminomethyl modification enzyme MnmG (629 aa).

FAD-binding positions include G13–G18, V125, and S180. G273–F287 contacts NAD(+). Q370 contributes to the FAD binding site.

It belongs to the MnmG family. In terms of assembly, homodimer. Heterotetramer of two MnmE and two MnmG subunits. FAD is required as a cofactor.

Its subcellular location is the cytoplasm. Functionally, NAD-binding protein involved in the addition of a carboxymethylaminomethyl (cmnm) group at the wobble position (U34) of certain tRNAs, forming tRNA-cmnm(5)s(2)U34. The protein is tRNA uridine 5-carboxymethylaminomethyl modification enzyme MnmG of Pasteurella multocida (strain Pm70).